Here is a 244-residue protein sequence, read N- to C-terminus: Probable fimbrial assembly protein FimC, serogroup H1 (244 aa).

This Dichelobacter nodosus (Bacteroides nodosus) protein is Probable fimbrial assembly protein FimC, serogroup H1 (fimC).